The primary structure comprises 938 residues: Isoleucine--tRNA ligase (938 aa).

The short motif at 58–68 (PYANGHLHMGH) is the 'HIGH' region element. Glu566 contributes to the L-isoleucyl-5'-AMP binding site. Positions 607-611 (KMSKS) match the 'KMSKS' region motif. Residue Lys610 coordinates ATP. Zn(2+)-binding residues include Cys906, Cys909, Cys926, and Cys929.

This sequence belongs to the class-I aminoacyl-tRNA synthetase family. IleS type 1 subfamily. In terms of assembly, monomer. Zn(2+) is required as a cofactor.

The protein resides in the cytoplasm. It carries out the reaction tRNA(Ile) + L-isoleucine + ATP = L-isoleucyl-tRNA(Ile) + AMP + diphosphate. Functionally, catalyzes the attachment of isoleucine to tRNA(Ile). As IleRS can inadvertently accommodate and process structurally similar amino acids such as valine, to avoid such errors it has two additional distinct tRNA(Ile)-dependent editing activities. One activity is designated as 'pretransfer' editing and involves the hydrolysis of activated Val-AMP. The other activity is designated 'posttransfer' editing and involves deacylation of mischarged Val-tRNA(Ile). The chain is Isoleucine--tRNA ligase from Desulfovibrio desulfuricans (strain ATCC 27774 / DSM 6949 / MB).